We begin with the raw amino-acid sequence, 122 residues long: Small ribosomal subunit protein uS13 (122 aa).

The tract at residues 95–122 (GLPVRGQKTKTNARTRKGPKRTVANKKK) is disordered.

The protein belongs to the universal ribosomal protein uS13 family. Part of the 30S ribosomal subunit. Forms a loose heterodimer with protein S19. Forms two bridges to the 50S subunit in the 70S ribosome.

In terms of biological role, located at the top of the head of the 30S subunit, it contacts several helices of the 16S rRNA. In the 70S ribosome it contacts the 23S rRNA (bridge B1a) and protein L5 of the 50S subunit (bridge B1b), connecting the 2 subunits; these bridges are implicated in subunit movement. Contacts the tRNAs in the A and P-sites. The chain is Small ribosomal subunit protein uS13 from Lachnoclostridium phytofermentans (strain ATCC 700394 / DSM 18823 / ISDg) (Clostridium phytofermentans).